The chain runs to 428 residues: MVEVYARLRAAVARLAVCSAAEKDGALRAVRDALHAQREDILRANAQDLARAREAGLAAPLVARLALSEHLLEDMLRSLTVLSLQRDPIGEIIEGYTLANGLEIRKVRVPLGVVAVIYESRPNVTVDAFALAYKSGNAVLLRAGSAASYSNAPLLRAIHVGLKKAHGVVDAVAVPPVLEEKYGDVDHILRARGFIDAVFPRGGAALIRRVVEGAHVPVIETGCGVCHLYVDESANIDVALQIAENAKLQKPAACNSVETLLVHRAVARPFLHRVQEIFATCEETTRKPGGVDFFCDAESFSLLTERGARKNVFHAQAETWDREYLDYQVSVRVVPNLEEALRHIARHSTKHSEVIVTRDRARARRFHQEVDAACVYVNASSRFTDGGQFGMGAEIGVSTQKLHARGPMGLCALTTSKYLIDGEGQVRP.

It belongs to the gamma-glutamyl phosphate reductase family.

Its subcellular location is the cytoplasm. It catalyses the reaction L-glutamate 5-semialdehyde + phosphate + NADP(+) = L-glutamyl 5-phosphate + NADPH + H(+). The protein operates within amino-acid biosynthesis; L-proline biosynthesis; L-glutamate 5-semialdehyde from L-glutamate: step 2/2. Catalyzes the NADPH-dependent reduction of L-glutamate 5-phosphate into L-glutamate 5-semialdehyde and phosphate. The product spontaneously undergoes cyclization to form 1-pyrroline-5-carboxylate. In Treponema pallidum (strain Nichols), this protein is Gamma-glutamyl phosphate reductase.